We begin with the raw amino-acid sequence, 189 residues long: Peptidyl-tRNA hydrolase (189 aa).

The Proton acceptor role is filled by His-19. The tRNA site is built by Tyr-64, Asn-66, and Asn-112.

This sequence belongs to the PTH family. In terms of assembly, monomer.

The protein localises to the cytoplasm. It catalyses the reaction an N-acyl-L-alpha-aminoacyl-tRNA + H2O = an N-acyl-L-amino acid + a tRNA + H(+). Hydrolyzes ribosome-free peptidyl-tRNAs (with 1 or more amino acids incorporated), which drop off the ribosome during protein synthesis, or as a result of ribosome stalling. In terms of biological role, catalyzes the release of premature peptidyl moieties from peptidyl-tRNA molecules trapped in stalled 50S ribosomal subunits, and thus maintains levels of free tRNAs and 50S ribosomes. The chain is Peptidyl-tRNA hydrolase from Gluconobacter oxydans (strain 621H) (Gluconobacter suboxydans).